The chain runs to 392 residues: Caveolae-associated protein 1 (392 aa).

Residue Met1 is modified to N-acetylmethionine. A compositionally biased stretch (basic and acidic residues) spans 1-10 (MEDVTLHIVE). The tract at residues 1 to 45 (MEDVTLHIVERPYSGFPDASSEGPEPTQGEARATEEPSGTGSDEL) is disordered. Residues 1–100 (MEDVTLHIVE…IQGELSKLGK (100 aa)) form a required for homotrimerization and for interaction with CAVIN2 and CAVIN3 region. Residues Ser21 and Ser38 each carry the phosphoserine modification. Thr40 bears the Phosphothreonine mark. 2 positions are modified to phosphoserine: Ser42 and Ser48. Residues 54 to 64 (VLVLSLLDKII) form a nuclear export signal region. The leucine-zipper 1 stretch occupies residues 55 to 77 (LVLSLLDKIIGAVDQIQLTQAQL). Residue Lys118 forms a Glycyl lysine isopeptide (Lys-Gly) (interchain with G-Cter in SUMO2) linkage. Phosphoserine is present on Ser120. A Glycyl lysine isopeptide (Lys-Gly) (interchain with G-Cter in SUMO2) cross-link involves residue Lys124. The tract at residues 138–154 (KKLEVNEAELLRRRNFK) is nuclear localization signal. The residue at position 158 (Tyr158) is a Phosphotyrosine. Lys163 participates in a covalent cross-link: Glycyl lysine isopeptide (Lys-Gly) (interchain with G-Cter in SUMO1); alternate. Residue Lys163 forms a Glycyl lysine isopeptide (Lys-Gly) (interchain with G-Cter in SUMO2); alternate linkage. A Glycyl lysine isopeptide (Lys-Gly) (interchain with G-Cter in SUMO2) cross-link involves residue Lys167. Residues 168–188 (LSVSKSLKESEALPEKEGDEL) form a leucine-zipper 2 region. Ser169 and Ser171 each carry phosphoserine. Lys172 participates in a covalent cross-link: Glycyl lysine isopeptide (Lys-Gly) (interchain with G-Cter in SUMO2). Ser173 and Ser177 each carry phosphoserine. Positions 173–183 (SLKESEALPEK) are enriched in basic and acidic residues. Positions 173 to 197 (SLKESEALPEKEGDELGEGERPEDD) are disordered. A compositionally biased stretch (acidic residues) spans 184-197 (EGDELGEGERPEDD). Thr198 is subject to Phosphothreonine. Residues 201–284 (IELSSDEAVE…RMNKLGTRLV (84 aa)) adopt a coiled-coil conformation. Phosphoserine is present on residues Ser204 and Ser205. Residues 235–251 (KKAFSKEKMEKTKVRTR) form a nuclear localization signal region. A leucine-zipper 3 region spans residues 259-299 (LKTKENLEKTRHTLEKRMNKLGTRLVPVERREKLKTSRDKL). Ser302 bears the Phosphoserine mark. Position 304 is a phosphothreonine (Thr304). Tyr310 is subject to Phosphotyrosine. A Glycyl lysine isopeptide (Lys-Gly) (interchain with G-Cter in SUMO2) cross-link involves residue Lys328. The tract at residues 347–367 (GPEDDEVGAERGEATDLLRGS) is disordered. A phosphoserine mark is found at Ser367, Ser368, Ser381, Ser389, and Ser391.

It belongs to the CAVIN family. As to quaternary structure, component of the CAVIN complex composed of CAVIN1, CAVIN2, CAVIN3 and CAVIN4. Homotrimer. Interacts with LIPE in the adipocyte cytoplasm. Interacts with RNA polymerase I subunit POLR1A/RPA1. Interacts with TTF1. Binds the 3' end of pre-rRNA. Interacts with transcription factor ZNF148. Interacts with CAV1, CAVIN2 and CAVIN3. Interacts with CAVIN4. Post-translationally, phosphorylated. Present in active and inactive forms. Changes in phosphorylation pattern may alter activity. Phosphorylation at Tyr-158 is essential for its function in the regulation of the ribosomal transcriptional activity. In terms of processing, monoubiquitinated. Expressed in the heart, stomach, adipose tissue and lung (at protein level). Expressed in testis, kidney, muscle, liver, spleen and brain.

The protein localises to the membrane. It is found in the caveola. Its subcellular location is the cell membrane. It localises to the microsome. The protein resides in the endoplasmic reticulum. The protein localises to the cytoplasm. It is found in the cytosol. Its subcellular location is the mitochondrion. It localises to the nucleus. Functionally, plays an important role in caveolae formation and organization. Essential for the formation of caveolae in all tissues. Core component of the CAVIN complex which is essential for recruitment of the complex to the caveolae in presence of calveolin-1 (CAV1). Essential for normal oligomerization of CAV1. Promotes ribosomal transcriptional activity in response to metabolic challenges in the adipocytes and plays an important role in the formation of the ribosomal transcriptional loop. Dissociates transcription complexes paused by DNA-bound TTF1, thereby releasing both RNA polymerase I and pre-RNA from the template. The caveolae biogenesis pathway is required for the secretion of proteins such as GASK1A. This is Caveolae-associated protein 1 (Cavin1) from Mus musculus (Mouse).